The primary structure comprises 385 residues: 4-hydroxy-3-methylbut-2-en-1-yl diphosphate synthase (flavodoxin) (385 aa).

[4Fe-4S] cluster is bound by residues C280, C283, C315, and E322.

It belongs to the IspG family. Requires [4Fe-4S] cluster as cofactor.

It catalyses the reaction (2E)-4-hydroxy-3-methylbut-2-enyl diphosphate + oxidized [flavodoxin] + H2O + 2 H(+) = 2-C-methyl-D-erythritol 2,4-cyclic diphosphate + reduced [flavodoxin]. Its pathway is isoprenoid biosynthesis; isopentenyl diphosphate biosynthesis via DXP pathway; isopentenyl diphosphate from 1-deoxy-D-xylulose 5-phosphate: step 5/6. Converts 2C-methyl-D-erythritol 2,4-cyclodiphosphate (ME-2,4cPP) into 1-hydroxy-2-methyl-2-(E)-butenyl 4-diphosphate. The chain is 4-hydroxy-3-methylbut-2-en-1-yl diphosphate synthase (flavodoxin) from Streptomyces griseus subsp. griseus (strain JCM 4626 / CBS 651.72 / NBRC 13350 / KCC S-0626 / ISP 5235).